The following is a 215-amino-acid chain: 3-isopropylmalate dehydratase small subunit (215 aa).

The protein belongs to the LeuD family. LeuD type 1 subfamily. In terms of assembly, heterodimer of LeuC and LeuD.

It catalyses the reaction (2R,3S)-3-isopropylmalate = (2S)-2-isopropylmalate. It participates in amino-acid biosynthesis; L-leucine biosynthesis; L-leucine from 3-methyl-2-oxobutanoate: step 2/4. Catalyzes the isomerization between 2-isopropylmalate and 3-isopropylmalate, via the formation of 2-isopropylmaleate. The protein is 3-isopropylmalate dehydratase small subunit of Acinetobacter baumannii (strain AB307-0294).